Reading from the N-terminus, the 171-residue chain is ATP synthase subunit b (171 aa).

A helical membrane pass occupies residues 4–24 (IAFFVICVGFPSLIFASASIQ).

Belongs to the ATPase B chain family. As to quaternary structure, F-type ATPases have 2 components, F(1) - the catalytic core - and F(0) - the membrane proton channel. F(1) has five subunits: alpha(3), beta(3), gamma(1), delta(1), epsilon(1). F(0) has three main subunits: a(1), b(2) and c(10-14). The alpha and beta chains form an alternating ring which encloses part of the gamma chain. F(1) is attached to F(0) by a central stalk formed by the gamma and epsilon chains, while a peripheral stalk is formed by the delta and b chains.

It localises to the cell inner membrane. In terms of biological role, f(1)F(0) ATP synthase produces ATP from ADP in the presence of a proton or sodium gradient. F-type ATPases consist of two structural domains, F(1) containing the extramembraneous catalytic core and F(0) containing the membrane proton channel, linked together by a central stalk and a peripheral stalk. During catalysis, ATP synthesis in the catalytic domain of F(1) is coupled via a rotary mechanism of the central stalk subunits to proton translocation. Its function is as follows. Component of the F(0) channel, it forms part of the peripheral stalk, linking F(1) to F(0). The sequence is that of ATP synthase subunit b from Helicobacter hepaticus (strain ATCC 51449 / 3B1).